The following is a 333-amino-acid chain: 3-isopropylmalate/3-methylmalate dehydrogenase (333 aa).

Positions 81, 91, 112, and 203 each coordinate substrate. Mg(2+) contacts are provided by D203, D227, and D231. 260-272 (GSAPDIAGKKIAN) is an NAD(+) binding site.

Belongs to the isocitrate and isopropylmalate dehydrogenases family. As to quaternary structure, homotetramer. Requires Mg(2+) as cofactor. The cofactor is Mn(2+).

It is found in the cytoplasm. The catalysed reaction is (2R,3S)-3-isopropylmalate + NAD(+) = 4-methyl-2-oxopentanoate + CO2 + NADH. The enzyme catalyses (2R,3S)-3-methylmalate + NAD(+) = 2-oxobutanoate + CO2 + NADH. It catalyses the reaction (R)-malate + NAD(+) = pyruvate + CO2 + NADH. Its pathway is amino-acid biosynthesis; L-leucine biosynthesis; L-leucine from 3-methyl-2-oxobutanoate: step 3/4. It functions in the pathway amino-acid biosynthesis; L-isoleucine biosynthesis; 2-oxobutanoate from pyruvate: step 3/3. In terms of biological role, catalyzes the oxidation of 3-carboxy-2-hydroxy-4-methylpentanoate (3-isopropylmalate) to 3-carboxy-4-methyl-2-oxopentanoate, which decarboxylates to 4-methyl-2-oxopentanoate (2-oxoisocaproate). Also catalyzes the oxidative decarboxylation of 3-methylmalate to 2-oxobutyrate, and that of D-malate to pyruvate. Cannot use NADP(+) instead of NAD(+). Cannot catalyze the oxidation of L-malate, L-tartrate, D-tartrate, DL-isocitrate, or DL-lactate. The protein is 3-isopropylmalate/3-methylmalate dehydrogenase (leuB) of Methanocaldococcus jannaschii (strain ATCC 43067 / DSM 2661 / JAL-1 / JCM 10045 / NBRC 100440) (Methanococcus jannaschii).